A 107-amino-acid polypeptide reads, in one-letter code: UPF0060 membrane protein Sala_0701 (107 aa).

4 helical membrane passes run 4–24 (FAYI…WAWL), 30–50 (VWWV…LTLV), 60–80 (AAYG…VEGA), and 87–107 (LIGA…PRGG).

This sequence belongs to the UPF0060 family.

The protein resides in the cell inner membrane. This chain is UPF0060 membrane protein Sala_0701, found in Sphingopyxis alaskensis (strain DSM 13593 / LMG 18877 / RB2256) (Sphingomonas alaskensis).